An 85-amino-acid chain; its full sequence is Cell division topological specificity factor (85 aa).

This sequence belongs to the MinE family.

Prevents the cell division inhibition by proteins MinC and MinD at internal division sites while permitting inhibition at polar sites. This ensures cell division at the proper site by restricting the formation of a division septum at the midpoint of the long axis of the cell. The protein is Cell division topological specificity factor of Xylella fastidiosa (strain M12).